A 485-amino-acid polypeptide reads, in one-letter code: MIVSQYLSALTFVLLLFKESRTWSYHASTEMMTFEEARDYCQKTYTALVAIQNQEEIEYLNSTFSYSPSYYWIGIRKINGTWTWIGTNKSLTKEATNWAPGEPNNKQSDEDCVEIYIKREKDSGKWNDEKCTKQKLALCYKAACNPTPCGSHGECVETINNYTCQCHPGFKGLKCEQVVTCPAQKHPEHGHLVCNPLGKFTYNSSCSISCAEGYLPSSTEATRCMSSGEWSTPLPKCNVVKCDALSNLDNGVVNCSPNHGSLPWNTTCTFECQEGYKLTGPQHLQCTSSGIWDNKQPTCKAVSCAAISHPQNGTVNCSHSVVGDFAFKSSCHFTCAEGFTLQGPTQVECTAQGQWTQRVPVCEVVRCSRLDVSGKLNMNCSGEPVLGTECTFACPERWTLNGSVVLTCGATGHWSGMLPTCEAPTVSQTPLAVGLSTAGVSLVTIPSFLFWLLKRLQKKAKKFSPASSCSSLKSNGCYSTPSKLI.

Residues 1 to 22 (MIVSQYLSALTFVLLLFKESRT) form the signal peptide. Residues 23 to 140 (WSYHASTEMM…CTKQKLALCY (118 aa)) enclose the C-type lectin domain. Residues 23 to 430 (WSYHASTEMM…CEAPTVSQTP (408 aa)) lie on the Extracellular side of the membrane. Cystine bridges form between cysteine 41–cysteine 139, cysteine 112–cysteine 131, cysteine 144–cysteine 155, cysteine 149–cysteine 164, cysteine 166–cysteine 175, cysteine 181–cysteine 224, cysteine 194–cysteine 206, cysteine 210–cysteine 237, cysteine 242–cysteine 286, cysteine 255–cysteine 268, cysteine 272–cysteine 299, cysteine 304–cysteine 349, cysteine 335–cysteine 362, cysteine 367–cysteine 408, and cysteine 394–cysteine 421. Asparagine 61, asparagine 79, and asparagine 88 each carry an N-linked (GlcNAc...) asparagine glycan. Residues glutamate 102, asparagine 104, and glutamate 110 each contribute to the Ca(2+) site. A carbohydrate-binding positions include 102–110 (EPNNKQSDE), 114–119 (EIYIKR), and 127–129 (NDE). Positions 127 and 128 each coordinate Ca(2+). In terms of domain architecture, EGF-like spans 141 to 176 (KAACNPTPCGSHGECVETINNYTCQCHPGFKGLKCE). N-linked (GlcNAc...) asparagine glycosylation occurs at asparagine 161. Sushi domains follow at residues 179–239 (VTCP…KCNV), 240–301 (VKCD…TCKA), 302–364 (VSCA…VCEV), and 365–423 (VRCS…TCEA). An N-linked (GlcNAc...) asparagine glycan is attached at asparagine 203. Asparagine 265 carries an N-linked (GlcNAc...) asparagine glycan. N-linked (GlcNAc...) asparagine glycosylation is found at asparagine 312 and asparagine 316. 2 N-linked (GlcNAc...) asparagine glycosylation sites follow: asparagine 379 and asparagine 401. The helical transmembrane segment at 431–453 (LAVGLSTAGVSLVTIPSFLFWLL) threads the bilayer. Topologically, residues 454 to 485 (KRLQKKAKKFSPASSCSSLKSNGCYSTPSKLI) are cytoplasmic. A disordered region spans residues 466-485 (ASSCSSLKSNGCYSTPSKLI).

The protein belongs to the selectin/LECAM family. In terms of assembly, interacts with SELPLG/PSGL1 and PODXL2 through the sialyl Lewis X epitope. SELPLG sulfation appears not to be required for this interaction.

Its subcellular location is the cell membrane. Cell-surface glycoprotein having a role in immunoadhesion. Mediates in the adhesion of blood neutrophils in cytokine-activated endothelium through interaction with SELPLG/PSGL1. May have a role in capillary morphogenesis. This is E-selectin (SELE) from Bos taurus (Bovine).